The chain runs to 220 residues: Protein-L-isoaspartate O-methyltransferase (220 aa).

Residue serine 65 is part of the active site.

This sequence belongs to the methyltransferase superfamily. L-isoaspartyl/D-aspartyl protein methyltransferase family.

It is found in the cytoplasm. It carries out the reaction [protein]-L-isoaspartate + S-adenosyl-L-methionine = [protein]-L-isoaspartate alpha-methyl ester + S-adenosyl-L-homocysteine. Functionally, catalyzes the methyl esterification of L-isoaspartyl residues in peptides and proteins that result from spontaneous decomposition of normal L-aspartyl and L-asparaginyl residues. It plays a role in the repair and/or degradation of damaged proteins. In Pyrococcus horikoshii (strain ATCC 700860 / DSM 12428 / JCM 9974 / NBRC 100139 / OT-3), this protein is Protein-L-isoaspartate O-methyltransferase (pcm).